A 282-amino-acid chain; its full sequence is Casein kinase II subunit beta-2 (282 aa).

A disordered region spans residues 1–92 (MYRERGMVGS…ESEVSGSDGE (92 aa)). The segment covering 13–28 (EVVDRKRINEIHDNRP) has biased composition (basic and acidic residues). 2 stretches are compositionally biased toward polar residues: residues 29-47 (SHSMSQPVNGKGKVTSTSV) and 61-71 (RSGSISKTNIS). Acidic residues predominate over residues 75-92 (DISDTDSEESEVSGSDGE).

The protein belongs to the casein kinase 2 subunit beta family. As to quaternary structure, heterotetramer of two catalytic alpha subunits and two regulatory beta subunits. Interacts with CCA1. Post-translationally, phosphorylated by alpha subunit.

It is found in the cytoplasm. Its subcellular location is the cytosol. The protein resides in the nucleus. Functionally, plays a complex role in regulating the basal catalytic activity of the alpha subunit. The tetrameric holoenzyme CK2, composed of two alpha and two beta subunits, phosphorylates the transcription factor PIF1 after an exposure to light, resulting in a proteasome-dependent degradation of PIF1 and promotion of photomorphogenesis. CK2 phosphorylates translation initiation factors. May participate in the regulation of the initiation of translation. This is Casein kinase II subunit beta-2 (CKB2) from Arabidopsis thaliana (Mouse-ear cress).